A 311-amino-acid polypeptide reads, in one-letter code: tRNA-cytidine(32) 2-sulfurtransferase (311 aa).

The PP-loop motif motif lies at 47-52 (SGGKDS). 3 residues coordinate [4Fe-4S] cluster: C122, C125, and C213.

It belongs to the TtcA family. Homodimer. Mg(2+) serves as cofactor. It depends on [4Fe-4S] cluster as a cofactor.

The protein resides in the cytoplasm. It carries out the reaction cytidine(32) in tRNA + S-sulfanyl-L-cysteinyl-[cysteine desulfurase] + AH2 + ATP = 2-thiocytidine(32) in tRNA + L-cysteinyl-[cysteine desulfurase] + A + AMP + diphosphate + H(+). It participates in tRNA modification. Its function is as follows. Catalyzes the ATP-dependent 2-thiolation of cytidine in position 32 of tRNA, to form 2-thiocytidine (s(2)C32). The sulfur atoms are provided by the cysteine/cysteine desulfurase (IscS) system. In Shigella boydii serotype 4 (strain Sb227), this protein is tRNA-cytidine(32) 2-sulfurtransferase.